We begin with the raw amino-acid sequence, 252 residues long: Small ribosomal subunit protein uS2 (252 aa).

The disordered stretch occupies residues 231–252 (SVESTAQEQVEETAQEETAVEA). A compositionally biased stretch (acidic residues) spans 239–252 (QVEETAQEETAVEA).

It belongs to the universal ribosomal protein uS2 family.

This Acetivibrio thermocellus (strain ATCC 27405 / DSM 1237 / JCM 9322 / NBRC 103400 / NCIMB 10682 / NRRL B-4536 / VPI 7372) (Clostridium thermocellum) protein is Small ribosomal subunit protein uS2.